The primary structure comprises 89 residues: DNA/RNA-binding protein Alba (89 aa).

K11 is modified (N6-acetyllysine).

It belongs to the histone-like Alba family. Post-translationally, acetylated. Acetylation at Lys-11 decreases DNA-binding affinity.

Its subcellular location is the cytoplasm. The protein localises to the chromosome. Its function is as follows. Binds double-stranded DNA tightly but without sequence specificity. Involved in DNA compaction. This is DNA/RNA-binding protein Alba from Thermoplasma volcanium (strain ATCC 51530 / DSM 4299 / JCM 9571 / NBRC 15438 / GSS1).